A 134-amino-acid chain; its full sequence is Probable glycine cleavage system H protein (134 aa).

In terms of domain architecture, Lipoyl-binding spans 29 to 110 (TVLVGITDYA…PYGAWIAKIK (82 aa)). Lys70 bears the N6-lipoyllysine mark.

This sequence belongs to the GcvH family. As to quaternary structure, the glycine cleavage system is composed of four proteins: P, T, L and H. Requires (R)-lipoate as cofactor.

The glycine cleavage system catalyzes the degradation of glycine. The H protein shuttles the methylamine group of glycine from the P protein to the T protein. In Pyrococcus abyssi (strain GE5 / Orsay), this protein is Probable glycine cleavage system H protein.